The chain runs to 202 residues: dITP/XTP pyrophosphatase (202 aa).

Position 10–15 (10–15 (TGNAGK)) interacts with substrate. Residues Asp46 and Asp75 each contribute to the Mg(2+) site. Residue Asp75 is the Proton acceptor of the active site. Residues Ser76, 160-163 (FGYD), Lys183, and 188-189 (HR) contribute to the substrate site.

This sequence belongs to the HAM1 NTPase family. As to quaternary structure, homodimer. Mg(2+) is required as a cofactor.

The enzyme catalyses XTP + H2O = XMP + diphosphate + H(+). It catalyses the reaction dITP + H2O = dIMP + diphosphate + H(+). The catalysed reaction is ITP + H2O = IMP + diphosphate + H(+). Pyrophosphatase that catalyzes the hydrolysis of nucleoside triphosphates to their monophosphate derivatives, with a high preference for the non-canonical purine nucleotides XTP (xanthosine triphosphate), dITP (deoxyinosine triphosphate) and ITP. Seems to function as a house-cleaning enzyme that removes non-canonical purine nucleotides from the nucleotide pool, thus preventing their incorporation into DNA/RNA and avoiding chromosomal lesions. The sequence is that of dITP/XTP pyrophosphatase from Idiomarina loihiensis (strain ATCC BAA-735 / DSM 15497 / L2-TR).